The primary structure comprises 239 residues: Fatty acid metabolism regulator protein (239 aa).

Residues 6-74 enclose the HTH gntR-type domain; sequence QSPAGFAEEY…HGKPTQVNNF (69 aa). Residues 34–53 constitute a DNA-binding region (H-T-H motif); sequence ERELSELIGVTRTTLREVLQ.

Homodimer.

The protein resides in the cytoplasm. Multifunctional regulator of fatty acid metabolism. The protein is Fatty acid metabolism regulator protein of Edwardsiella ictaluri (strain 93-146).